A 614-amino-acid polypeptide reads, in one-letter code: 1-deoxy-D-xylulose-5-phosphate synthase (614 aa).

Residues His-74 and 115–117 contribute to the thiamine diphosphate site; that span reads AHS. Asp-146 serves as a coordination point for Mg(2+). Residues 147–148, Asn-175, Tyr-282, and Glu-363 contribute to the thiamine diphosphate site; that span reads GA. Asn-175 lines the Mg(2+) pocket.

This sequence belongs to the transketolase family. DXPS subfamily. In terms of assembly, homodimer. Mg(2+) is required as a cofactor. It depends on thiamine diphosphate as a cofactor.

The catalysed reaction is D-glyceraldehyde 3-phosphate + pyruvate + H(+) = 1-deoxy-D-xylulose 5-phosphate + CO2. The protein operates within metabolic intermediate biosynthesis; 1-deoxy-D-xylulose 5-phosphate biosynthesis; 1-deoxy-D-xylulose 5-phosphate from D-glyceraldehyde 3-phosphate and pyruvate: step 1/1. Its function is as follows. Catalyzes the acyloin condensation reaction between C atoms 2 and 3 of pyruvate and glyceraldehyde 3-phosphate to yield 1-deoxy-D-xylulose-5-phosphate (DXP). The polypeptide is 1-deoxy-D-xylulose-5-phosphate synthase (Nitrosomonas europaea (strain ATCC 19718 / CIP 103999 / KCTC 2705 / NBRC 14298)).